The chain runs to 836 residues: Protein O-mannosyl-transferase tmtc2 (836 aa).

The chain crosses the membrane as a helical span at residues 1-21 (MIAELLSSALGLLLYLNTLGA). The Extracellular portion of the chain corresponds to 22 to 77 (DFCYDDSRAIKTNQDLLPETPWNHIFFNDFWGTLLTHSGSHKSYRPLCTLSFRLNY). A helical membrane pass occupies residues 78–98 (LFGGLDPWNYHLVNVLLHSAV). The Cytoplasmic segment spans residues 99–107 (TGLFTNLCK). The chain crosses the membrane as a helical span at residues 108-128 (ALFGSGCWTLIAGLLFASHPI). Over 129–132 (HTEA) the chain is Extracellular. A helical membrane pass occupies residues 133 to 153 (VSGIVGRADVGSGLFFLLSLL). Residues 154 to 164 (CYMKHCSTRGY) lie on the Cytoplasmic side of the membrane. Residues 165-185 (SLSSWCWILCAGFWAACSMLW) traverse the membrane as a helical segment. Topologically, residues 186–188 (KEQ) are extracellular. Residues 189-209 (GVTVLAVSAVYDVFVFHKLKM) traverse the membrane as a helical segment. Residues 210-220 (NQIISVVFKEK) are Cytoplasmic-facing. Residues 221-241 (NVSFFFSVGLLFAWGVILLGA) traverse the membrane as a helical segment. Topologically, residues 242 to 312 (RFYWMGNTPP…KTITDWRNIH (71 aa)) are extracellular. Residues 313 to 333 (TVAFYILLILLAYSSLKGSAI) traverse the membrane as a helical segment. Over 334 to 392 (KRDCNGKVFMNGKQNTNGHSCQSDLEHKNAEQNPVIASKLENGVKHHNSHEMQLPSTEN) the chain is Cytoplasmic. The chain crosses the membrane as a helical span at residues 393-413 (IVVLALSLLIVPFVPASNLFF). Position 414 (Y414) is a topological domain, extracellular. The helical transmembrane segment at 415–435 (VGFVIAERVLYIPSMGFCLLV) threads the bilayer. Residues 436-449 (TVGARALYIKAQKN) are Cytoplasmic-facing. A helical transmembrane segment spans residues 450-470 (ILKNLLFYATAALIVFYGLKT). Over 471–836 (VVRNGDWKNE…EKQGLKNSKT (366 aa)) the chain is Extracellular. TPR repeat units lie at residues 493-526 (AKAW…RSNM), 527-560 (ADML…RPTL), 561-594 (ASGY…PDEN), 606-639 (TSCL…MPRQ), 643-676 (QSLY…KPDH), 677-710 (IPAH…DPNK), 711-744 (GNCY…DSSE), 745-778 (FDVV…RQNY), and 779-812 (PAAL…KPDD).

Belongs to the TMTC family.

The protein resides in the membrane. Its subcellular location is the endoplasmic reticulum. It carries out the reaction a di-trans,poly-cis-dolichyl beta-D-mannosyl phosphate + L-seryl-[protein] = 3-O-(alpha-D-mannosyl)-L-seryl-[protein] + a di-trans,poly-cis-dolichyl phosphate + H(+). The catalysed reaction is a di-trans,poly-cis-dolichyl beta-D-mannosyl phosphate + L-threonyl-[protein] = 3-O-(alpha-D-mannosyl)-L-threonyl-[protein] + a di-trans,poly-cis-dolichyl phosphate + H(+). It participates in protein modification; protein glycosylation. Its function is as follows. Transfers mannosyl residues to the hydroxyl group of serine or threonine residues. This is Protein O-mannosyl-transferase tmtc2 (tmtc2) from Xenopus laevis (African clawed frog).